A 155-amino-acid polypeptide reads, in one-letter code: Ribosomal RNA large subunit methyltransferase H (155 aa).

S-adenosyl-L-methionine-binding positions include Leu72, Gly103, and 122-127 (FGRMVW).

This sequence belongs to the RNA methyltransferase RlmH family. As to quaternary structure, homodimer.

The protein resides in the cytoplasm. The enzyme catalyses pseudouridine(1915) in 23S rRNA + S-adenosyl-L-methionine = N(3)-methylpseudouridine(1915) in 23S rRNA + S-adenosyl-L-homocysteine + H(+). Its function is as follows. Specifically methylates the pseudouridine at position 1915 (m3Psi1915) in 23S rRNA. This chain is Ribosomal RNA large subunit methyltransferase H, found in Cereibacter sphaeroides (strain ATCC 17023 / DSM 158 / JCM 6121 / CCUG 31486 / LMG 2827 / NBRC 12203 / NCIMB 8253 / ATH 2.4.1.) (Rhodobacter sphaeroides).